A 374-amino-acid chain; its full sequence is RNA polymerase sigma factor SigA (374 aa).

Positions 141 to 211 are sigma-70 factor domain-2; the sequence is LAEANLRLVV…TRAIADQART (71 aa). Residues 165–168 carry the Interaction with polymerase core subunit RpoC motif; that stretch reads DLIQ. The tract at residues 220–296 is sigma-70 factor domain-3; that stretch reads ETINKLIRVQ…DQDATSPSDH (77 aa). Residues 309–362 are sigma-70 factor domain-4; that stretch reads VLDTLTDREENVLRLRFGLDDGRTRTLEEVGRVFGVTRERIRQIEAKALRKLRH. Residues 335 to 354 constitute a DNA-binding region (H-T-H motif); that stretch reads LEEVGRVFGVTRERIRQIEA.

This sequence belongs to the sigma-70 factor family. RpoD/SigA subfamily. Interacts transiently with the RNA polymerase catalytic core.

The protein localises to the cytoplasm. Functionally, sigma factors are initiation factors that promote the attachment of RNA polymerase to specific initiation sites and are then released. This sigma factor is the primary sigma factor during exponential growth. The sequence is that of RNA polymerase sigma factor SigA from Listeria monocytogenes serovar 1/2a (strain ATCC BAA-679 / EGD-e).